Reading from the N-terminus, the 314-residue chain is RNA 2'-O-methyltransferase FBLL1 (314 aa).

The segment covering 1–59 has biased composition (gly residues); it reads MKPAGGRGGWGWGGGKGGSKGGDTGSGTKGGFGARTRGSSGGGRGRGRGGGGGGGGGGG. Positions 1-82 are disordered; it reads MKPAGGRGGW…RRKKGITVSV (82 aa). Omega-N-methylarginine is present on R7. Residues 64 to 77 show a composition bias toward basic residues; sequence RGGPGKNKNRRKKG. S-adenosyl-L-methionine is bound by residues 166–167, 185–186, 210–211, and 230–233; these read TT, EF, DA, and DVAQ.

Belongs to the methyltransferase superfamily. Fibrillarin family. As to quaternary structure, component of a box C/D small nucleolar ribonucleoprotein (snoRNP) complex composed of FBLL1, SNU13/NHP2L1, NOP56 and NOP58 and a guide snoRNA which mediates 2'-hydroxyl ribose methylation in RNAs.

The protein localises to the nucleus. The protein resides in the nucleolus. The enzyme catalyses a ribonucleotide in RNA + S-adenosyl-L-methionine = a 2'-O-methylribonucleotide in RNA + S-adenosyl-L-homocysteine + H(+). Its function is as follows. S-adenosyl-L-methionine-dependent RNA methyltransferase that catalyzes 2'-hydroxyl ribose methylation in RNAs. Functions as part of box C/D small nucleolar ribonucleoprotein (snoRNP) complexes, where guide snoRNAs ensure methylation specificity through base pairing with RNA substrates. Exhibits broad substrate specificity, methylating multiple sites on ribosomal RNAs (rRNAs) and messenger RNAs (mRNAs) depending on the guide snoRNA incorporated in the complex. Specifically expressed in brain, it regulates the expression of GAP43 by stabilizing its mRNA through methylation and thereby plays an indirect role in neuronal differentiation. In Mus musculus (Mouse), this protein is RNA 2'-O-methyltransferase FBLL1.